A 184-amino-acid chain; its full sequence is Large ribosomal subunit protein uL22 (184 aa).

Belongs to the universal ribosomal protein uL22 family.

This Yarrowia lipolytica (strain CLIB 122 / E 150) (Yeast) protein is Large ribosomal subunit protein uL22 (RPL17).